Here is a 780-residue protein sequence, read N- to C-terminus: Zinc finger protein GLIS3 (780 aa).

Polar residues-rich tracts occupy residues 80–92 (PSLS…QNGT) and 106–115 (VSGNSVSNSL). 2 disordered regions span residues 80-148 (PSLS…KKRA) and 290-315 (PSAL…HLHH). The segment covering 135-148 (SATRAHSTRSKKRA) has biased composition (basic residues). Over residues 293 to 308 (LPLPLPPPQGPPPPYH) the composition is skewed to pro residues. The C2H2-type 1 zinc-finger motif lies at 345 to 370 (HCCRWIDCSALYDQQEELVRHIEKVH). A C2H2-type 2; atypical zinc finger spans residues 379 to 406 (FTCFWTGCPRRYKPFNARYKLLIHMRVH). 3 C2H2-type zinc fingers span residues 412-436 (NKCT…LRSH), 442-466 (YLCQ…QRTH), and 472-496 (YACQ…VKAH). 2 disordered regions span residues 485–512 (DPSS…SSTE) and 527–670 (LQPA…QPNG). A Bipartite nuclear localization signal motif is present at residues 490–506 (RKHVKAHSSREQQARKK). Residues 497–512 (SSREQQARKKLRSSTE) show a composition bias toward basic and acidic residues. Low complexity predominate over residues 567–577 (HSTRSGTAAGA). Residues 593 to 605 (VQGSPHNPSSQLP) are compositionally biased toward polar residues.

Belongs to the GLI C2H2-type zinc-finger protein family. As to expression, in the embryo, expressed at high levels in the kidney and testis. In the adult, expressed at high levels in the kidney and uterus and at lower levels in the brain, lung, skeletal muscle and pancreas.

The protein resides in the nucleus. In terms of biological role, acts both as a repressor and activator of transcription. Binds to the consensus sequence 5'-GACCACCCAC-3'. The chain is Zinc finger protein GLIS3 from Mus musculus (Mouse).